The following is a 138-amino-acid chain: Large ribosomal subunit protein bL17 (138 aa).

The protein belongs to the bacterial ribosomal protein bL17 family. Part of the 50S ribosomal subunit. Contacts protein L32.

The polypeptide is Large ribosomal subunit protein bL17 (Dinoroseobacter shibae (strain DSM 16493 / NCIMB 14021 / DFL 12)).